Reading from the N-terminus, the 380-residue chain is DNA replication and repair protein RecF (380 aa).

30–37 (GENAQGKT) contributes to the ATP binding site.

The protein belongs to the RecF family.

The protein localises to the cytoplasm. Functionally, the RecF protein is involved in DNA metabolism; it is required for DNA replication and normal SOS inducibility. RecF binds preferentially to single-stranded, linear DNA. It also seems to bind ATP. This Synechococcus sp. (strain JA-3-3Ab) (Cyanobacteria bacterium Yellowstone A-Prime) protein is DNA replication and repair protein RecF.